A 364-amino-acid polypeptide reads, in one-letter code: Aminomethyltransferase (364 aa).

The protein belongs to the GcvT family. In terms of assembly, the glycine cleavage system is composed of four proteins: P, T, L and H.

It catalyses the reaction N(6)-[(R)-S(8)-aminomethyldihydrolipoyl]-L-lysyl-[protein] + (6S)-5,6,7,8-tetrahydrofolate = N(6)-[(R)-dihydrolipoyl]-L-lysyl-[protein] + (6R)-5,10-methylene-5,6,7,8-tetrahydrofolate + NH4(+). In terms of biological role, the glycine cleavage system catalyzes the degradation of glycine. In Shewanella loihica (strain ATCC BAA-1088 / PV-4), this protein is Aminomethyltransferase.